The sequence spans 183 residues: Ribosome rescue factor SmrB (183 aa).

The 76-residue stretch at Leu98–Glu173 folds into the Smr domain.

Belongs to the SmrB family. As to quaternary structure, associates with collided ribosomes, but not with correctly translating polysomes.

Its function is as follows. Acts as a ribosome collision sensor. Detects stalled/collided disomes (pairs of ribosomes where the leading ribosome is stalled and a second ribosome has collided with it) and endonucleolytically cleaves mRNA at the 5' boundary of the stalled ribosome. Stalled/collided disomes form a new interface (primarily via the 30S subunits) that binds SmrB. Cleaved mRNA becomes available for tmRNA ligation, leading to ribosomal subunit dissociation and rescue of stalled ribosomes. This is Ribosome rescue factor SmrB from Salmonella paratyphi A (strain ATCC 9150 / SARB42).